The following is a 351-amino-acid chain: MKSLKEEIQKLAADLNIQKIGFTKADDFEYLRASLIEQKEAGHTSGFEHKNLDERLQPKLSLEDAKTIISIGIAYPNKAEEKPEKTEYRRGSFSRGSWGEDYHHVLRRKLKELAEGIEKIAGDFNYTAMVDTGALVDVAVAARAGLGFVGKNGLLVSKEYGSWMFLGELVTNLDIEEDQPVDYGCGSCTRCVDFCPTKALLGDGRLNAQRCLSYQTQTRGVMPEEYREKIKTVIYGCDICQVVCPYNKGINSHFHPEMEPDPDLTNPELLPLLDLSNKEFANKFGNMAGSWRGKNPIQRNVVYALGNANDRSALPKLHDIAENDVRDYMVDAAEWAIEKLENKHRMRPRKR.

Asp-131 (proton donor) is an active-site residue. Positions 177-205 constitute a 4Fe-4S ferredoxin-type domain; sequence EDQPVDYGCGSCTRCVDFCPTKALLGDGR. [4Fe-4S] cluster-binding residues include Cys-185, Cys-188, Cys-191, Cys-195, Cys-211, Cys-237, Cys-240, and Cys-244.

It belongs to the QueG family. Monomer. The cofactor is cob(II)alamin. It depends on [4Fe-4S] cluster as a cofactor.

It is found in the cytoplasm. It catalyses the reaction epoxyqueuosine(34) in tRNA + AH2 = queuosine(34) in tRNA + A + H2O. It functions in the pathway tRNA modification; tRNA-queuosine biosynthesis. Catalyzes the conversion of epoxyqueuosine (oQ) to queuosine (Q), which is a hypermodified base found in the wobble positions of tRNA(Asp), tRNA(Asn), tRNA(His) and tRNA(Tyr). In Lactococcus garvieae (strain Lg2) (Enterococcus seriolicida), this protein is Epoxyqueuosine reductase.